The following is a 310-amino-acid chain: Aspartate carbamoyltransferase catalytic subunit 3 (310 aa).

Residues Arg55 and Thr56 each contribute to the carbamoyl phosphate site. Position 85 (Lys85) interacts with L-aspartate. Carbamoyl phosphate-binding residues include Arg106, His134, and Gln137. 2 residues coordinate L-aspartate: Arg167 and Arg228. 2 residues coordinate carbamoyl phosphate: Leu266 and Pro267.

Belongs to the aspartate/ornithine carbamoyltransferase superfamily. ATCase family. In terms of assembly, heterododecamer (2C3:3R2) of six catalytic PyrB chains organized as two trimers (C3), and six regulatory PyrI chains organized as three dimers (R2).

It catalyses the reaction carbamoyl phosphate + L-aspartate = N-carbamoyl-L-aspartate + phosphate + H(+). Its pathway is pyrimidine metabolism; UMP biosynthesis via de novo pathway; (S)-dihydroorotate from bicarbonate: step 2/3. Its function is as follows. Catalyzes the condensation of carbamoyl phosphate and aspartate to form carbamoyl aspartate and inorganic phosphate, the committed step in the de novo pyrimidine nucleotide biosynthesis pathway. This is Aspartate carbamoyltransferase catalytic subunit 3 from Shewanella halifaxensis (strain HAW-EB4).